We begin with the raw amino-acid sequence, 306 residues long: Protein YIPF1 (306 aa).

Over 1 to 119 (MAAVDDLQFE…VRLYIRSNPD (119 aa)) the chain is Cytoplasmic. The tract at residues 14–62 (NAATSLTANPDATTVNIEDPGETPKHQSGSPRGSGREEDDELLGNDDSD) is disordered. Over residues 15–29 (AATSLTANPDATTVN) the composition is skewed to polar residues. Over residues 50 to 59 (EEDDELLGND) the composition is skewed to acidic residues. A helical transmembrane segment spans residues 120 to 140 (LYGPFWICATLVFAIAISGNL). Residues 141–162 (SNFLIHLGEKTYRYVPEFRKVS) are Lumenal-facing. The chain crosses the membrane as a helical span at residues 163 to 183 (IAATTIYAYAWLVPLALWGFL). The Cytoplasmic portion of the chain corresponds to 184–200 (MWRNSKVMNIVSYSFLE). A helical membrane pass occupies residues 201–221 (IVCVYGYSLFIYIPTAILWII). Residues 222–227 (PQKAVR) are Lumenal-facing. The chain crosses the membrane as a helical span at residues 228-248 (WILVMIALGISGSVLAMTFWP). The Cytoplasmic segment spans residues 249-256 (AVREDNRR). The chain crosses the membrane as a helical span at residues 257–277 (VALATIVTIVLLHMLLSVGCL). The Lumenal portion of the chain corresponds to 278 to 306 (AYFFDAPEMDHLPTTTATPNQTVAAAKSS). N-linked (GlcNAc...) asparagine glycosylation occurs at asparagine 297.

The protein belongs to the YIP1 family. In terms of assembly, interacts with YIPF6; this interaction may stabilize YIPF1. May also form a ternary complex with YIPF2 and YIPF6.

It localises to the golgi apparatus. The protein localises to the cis-Golgi network membrane. Its subcellular location is the trans-Golgi network membrane. It is found in the late endosome membrane. The polypeptide is Protein YIPF1 (YIPF1) (Pongo abelii (Sumatran orangutan)).